The following is a 76-amino-acid chain: Large ribosomal subunit protein eL20 (76 aa).

It belongs to the eukaryotic ribosomal protein eL20 family. In terms of assembly, part of the 50S ribosomal subunit. Binds 23S rRNA.

This Methanococcus maripaludis (strain C5 / ATCC BAA-1333) protein is Large ribosomal subunit protein eL20.